We begin with the raw amino-acid sequence, 412 residues long: Multifunctional CCA protein (412 aa).

Positions 8 and 11 each coordinate ATP. CTP-binding residues include Gly8 and Arg11. Mg(2+) is bound by residues Asp21 and Asp23. ATP is bound by residues Arg91, Arg137, and Arg140. CTP-binding residues include Arg91, Arg137, and Arg140. An HD domain is found at 228-329 (TGIHTLMTLS…VKLFDSIDAW (102 aa)).

This sequence belongs to the tRNA nucleotidyltransferase/poly(A) polymerase family. Bacterial CCA-adding enzyme type 1 subfamily. Monomer. Can also form homodimers and oligomers. Mg(2+) is required as a cofactor. The cofactor is Ni(2+).

The enzyme catalyses a tRNA precursor + 2 CTP + ATP = a tRNA with a 3' CCA end + 3 diphosphate. It catalyses the reaction a tRNA with a 3' CCA end + 2 CTP + ATP = a tRNA with a 3' CCACCA end + 3 diphosphate. Its function is as follows. Catalyzes the addition and repair of the essential 3'-terminal CCA sequence in tRNAs without using a nucleic acid template. Adds these three nucleotides in the order of C, C, and A to the tRNA nucleotide-73, using CTP and ATP as substrates and producing inorganic pyrophosphate. tRNA 3'-terminal CCA addition is required both for tRNA processing and repair. Also involved in tRNA surveillance by mediating tandem CCA addition to generate a CCACCA at the 3' terminus of unstable tRNAs. While stable tRNAs receive only 3'-terminal CCA, unstable tRNAs are marked with CCACCA and rapidly degraded. The protein is Multifunctional CCA protein of Escherichia coli O1:K1 / APEC.